The chain runs to 227 residues: ATP synthase subunit a (227 aa).

The next 5 membrane-spanning stretches (helical) occupy residues 16 to 36, 79 to 99, 105 to 125, 176 to 196, and 202 to 222; these read AFVYAFHFCLVALIILIVAYI, LVATIGFIVFFSNVIGIIPGF, SLNLTLVLALVVFIYYNFEGI, LFLLAMLTLAPWFAPLPAFAL, and VLQTFIFMMLTYVYLAGAVAI.

Belongs to the ATPase A chain family. In terms of assembly, F-type ATPases have 2 components, CF(1) - the catalytic core - and CF(0) - the membrane proton channel. CF(1) has five subunits: alpha(3), beta(3), gamma(1), delta(1), epsilon(1). CF(0) has three main subunits: a(1), b(2) and c(9-12). The alpha and beta chains form an alternating ring which encloses part of the gamma chain. CF(1) is attached to CF(0) by a central stalk formed by the gamma and epsilon chains, while a peripheral stalk is formed by the delta and b chains.

Its subcellular location is the cell inner membrane. Functionally, key component of the proton channel; it plays a direct role in the translocation of protons across the membrane. This chain is ATP synthase subunit a, found in Campylobacter concisus (strain 13826).